The sequence spans 180 residues: UPF0134 protein MPN_368 (180 aa).

It belongs to the UPF0134 family.

The protein is UPF0134 protein MPN_368 of Mycoplasma pneumoniae (strain ATCC 29342 / M129 / Subtype 1) (Mycoplasmoides pneumoniae).